Reading from the N-terminus, the 993-residue chain is Glycogen phosphorylase 2 (993 aa).

A disordered region spans residues 1-82 (MEEKRSTNSP…SNQSEDPATQ (82 aa)). Residues 19–48 (RSGSITSATSHPPRSNSNPKLVAKHQQQLY) show a composition bias toward polar residues. Low complexity predominate over residues 58 to 77 (EQQNQQPQQQQQKQTSNQSE). K763 bears the N6-(pyridoxal phosphate)lysine mark. Positions 962–981 (VISGGDKTNNTLKPKQTTKG) are enriched in polar residues. Residues 962 to 993 (VISGGDKTNNTLKPKQTTKGFNIGGQPGNPTN) are disordered. The span at 983–993 (NIGGQPGNPTN) shows a compositional bias: gly residues.

The protein belongs to the glycogen phosphorylase family. As to quaternary structure, homodimer. Pyridoxal 5'-phosphate is required as a cofactor. In terms of processing, the N-terminus is blocked. Enzyme activity requires processing of the 113 kDa peptide to an enzymatically active 106 kDa form of the protein. Processing would occur near the middle of the Gln-rich repetitive element.

It catalyses the reaction [(1-&gt;4)-alpha-D-glucosyl](n) + phosphate = [(1-&gt;4)-alpha-D-glucosyl](n-1) + alpha-D-glucose 1-phosphate. Its function is as follows. Phosphorylase is an important allosteric enzyme in carbohydrate metabolism. Enzymes from different sources differ in their regulatory mechanisms and in their natural substrates. However, all known phosphorylases share catalytic and structural properties. This chain is Glycogen phosphorylase 2 (glpD), found in Dictyostelium discoideum (Social amoeba).